The chain runs to 466 residues: NVGLKAVFKDYKLTYYTPDYETKVTDILAAFRVTPQPGVPPEEAGAAVAXESSTGTWTTVWTDGLTSLDRYKGPCYHIEPVAGEENQFIAYVAYPLDLFEEGXVTNMFTSIVGNVFGFKALRALRLEDLRIPPAYVKTFQGPPHGIQVERDKLNKYGRPLLGCTIKPKLGLSAKNYGRAVYECLRGGLDFTKDDENVNSQPFMRWRDRFLFXXEALYKAQAETGEIKGHYLNXTAGTSEEMIKRAVFARELGVPIVMHDYLTGGFTSNTSLAHYCRDNGLLLHIHRAMHAVIDRQKNHGIHFRVLAKXLRMSGGDHIHSGTVVGKLEGEREITLGFVDLLRDDFIEKDRSRGIYFTQDWVSMPGVLPVRSGGIHVWHMPALTEIFGDDSVLQFGGGTLGHPWGNAPGRVANRVALEACVQARNEGRDLAREGNEIIRKAATWSPELSAACEVWKEIKFEFAAMDTL.

Lys-5 bears the N6,N6,N6-trimethyllysine mark. Asn-114 and Thr-164 together coordinate substrate. The active-site Proton acceptor is Lys-166. Lys-168 is a binding site for substrate. Mg(2+) contacts are provided by Lys-192, Asp-194, and Glu-195. An N6-carboxylysine modification is found at Lys-192. The active-site Proton acceptor is His-285. Residues Arg-286, His-318, and Ser-370 each contribute to the substrate site.

The protein belongs to the RuBisCO large chain family. Type I subfamily. Heterohexadecamer of 8 large chains and 8 small chains. Requires Mg(2+) as cofactor.

The protein localises to the plastid. Its subcellular location is the chloroplast. It carries out the reaction 2 (2R)-3-phosphoglycerate + 2 H(+) = D-ribulose 1,5-bisphosphate + CO2 + H2O. It catalyses the reaction D-ribulose 1,5-bisphosphate + O2 = 2-phosphoglycolate + (2R)-3-phosphoglycerate + 2 H(+). RuBisCO catalyzes two reactions: the carboxylation of D-ribulose 1,5-bisphosphate, the primary event in carbon dioxide fixation, as well as the oxidative fragmentation of the pentose substrate in the photorespiration process. Both reactions occur simultaneously and in competition at the same active site. In Lobelia sp, this protein is Ribulose bisphosphate carboxylase large chain.